The chain runs to 196 residues: Ribonuclease HII (196 aa).

Residues Leu13–Phe196 form the RNase H type-2 domain. A divalent metal cation-binding residues include Asp19, Glu20, and Asp111.

This sequence belongs to the RNase HII family. The cofactor is Mn(2+). It depends on Mg(2+) as a cofactor.

The protein localises to the cytoplasm. It carries out the reaction Endonucleolytic cleavage to 5'-phosphomonoester.. Its function is as follows. Endonuclease that specifically degrades the RNA of RNA-DNA hybrids. In Aquifex aeolicus (strain VF5), this protein is Ribonuclease HII (rnhB).